A 294-amino-acid chain; its full sequence is Small ribosomal subunit protein uS2 (294 aa).

Over residues 232-245 the composition is skewed to basic and acidic residues; the sequence is RAAEQDKAADDKAQ. A disordered region spans residues 232–294; it reads RAAEQDKAAD…GSEEDGEAAN (63 aa). Residues 246-265 are compositionally biased toward low complexity; the sequence is EQAAAEAAKPEPAAPAPAAE.

Belongs to the universal ribosomal protein uS2 family.

The polypeptide is Small ribosomal subunit protein uS2 (Desulfatibacillum aliphaticivorans).